The primary structure comprises 156 residues: 3-hydroxyacyl-[acyl-carrier-protein] dehydratase FabZ (156 aa).

H50 is an active-site residue.

It belongs to the thioester dehydratase family. FabZ subfamily.

It is found in the cytoplasm. It catalyses the reaction a (3R)-hydroxyacyl-[ACP] = a (2E)-enoyl-[ACP] + H2O. Its function is as follows. Involved in unsaturated fatty acids biosynthesis. Catalyzes the dehydration of short chain beta-hydroxyacyl-ACPs and long chain saturated and unsaturated beta-hydroxyacyl-ACPs. The sequence is that of 3-hydroxyacyl-[acyl-carrier-protein] dehydratase FabZ from Janthinobacterium sp. (strain Marseille) (Minibacterium massiliensis).